The chain runs to 63 residues: Kurtoxin-like II (63 aa).

An LCN-type CS-alpha/beta domain is found at 2–62 (IDGYPVDYWN…ARIKRSGRCR (61 aa)). 4 cysteine pairs are disulfide-bonded: C12/C61, C16/C37, C23/C44, and C27/C46.

It belongs to the long (4 C-C) scorpion toxin superfamily. Sodium channel inhibitor family. Alpha subfamily. Expressed by the venom gland.

The protein localises to the secreted. This neurotoxin acts on sodium and calcium channels. Potently inhibits native voltage-gated T-type calcium channel activity in mouse male germ cells. Also binds Cav3.1/CACNA1G, Cav3.2/CACNA1H, and Cav3.3/CACNA1I T-type calcium channels and inhibits the channels by modifying voltage-dependent gating. In addition, binds and significantly inhibits the inactivation of activated sodium channels (Nav1.2/SCN2A and Nav1.5/SCN5A). The polypeptide is Kurtoxin-like II (Parabuthus granulatus (Granulated thick-tailed scorpion)).